The following is a 278-amino-acid chain: 4-deoxy-L-threo-5-hexosulose-uronate ketol-isomerase (278 aa).

Positions 196, 198, 203, and 245 each coordinate Zn(2+).

Belongs to the KduI family. Zn(2+) serves as cofactor.

It carries out the reaction 5-dehydro-4-deoxy-D-glucuronate = 3-deoxy-D-glycero-2,5-hexodiulosonate. Its pathway is glycan metabolism; pectin degradation; 2-dehydro-3-deoxy-D-gluconate from pectin: step 4/5. Its function is as follows. Catalyzes the isomerization of 5-dehydro-4-deoxy-D-glucuronate to 3-deoxy-D-glycero-2,5-hexodiulosonate. The chain is 4-deoxy-L-threo-5-hexosulose-uronate ketol-isomerase from Shigella boydii serotype 4 (strain Sb227).